We begin with the raw amino-acid sequence, 681 residues long: Propionyl-CoA carboxylase alpha chain (681 aa).

The Biotin carboxylation domain maps to 1 to 466; it reads MFNKILIANR…TTAFIAEEYP (466 aa). ATP contacts are provided by residues K116, 148 to 209, E200, and N235; that span reads SNQI…PRHI. Residues 120–317 enclose the ATP-grasp domain; it reads KKIAQEANVS…LVEQMIRVAA (198 aa). Mg(2+) is bound by residues E275, E288, and N290. The Mn(2+) site is built by E275, E288, and N290. The active site involves E288. F348 contributes to the biotin binding site. In terms of domain architecture, Biotinyl-binding spans 602–681; the sequence is LMPEKLPPDT…AVDDVIMEFE (80 aa). K647 bears the N6-biotinyllysine mark.

The holoenzyme is a dodecamer composed of 6 PccA/alpha subunits and 6 PccB/beta subunits. Mg(2+) is required as a cofactor. The cofactor is Mn(2+). Requires biotin as cofactor. The biotin cofactor is covalently attached to the C-terminal biotinyl-binding domain and is required for the catalytic activity.

The catalysed reaction is propanoyl-CoA + hydrogencarbonate + ATP = (S)-methylmalonyl-CoA + ADP + phosphate + H(+). Its pathway is metabolic intermediate metabolism; propanoyl-CoA degradation; succinyl-CoA from propanoyl-CoA: step 1/3. Its function is as follows. This is one of the 2 subunits of the biotin-dependent propionyl-CoA carboxylase (PCC), the enzyme catalyzing the carboxylation of propionyl-CoA/propanoyl-CoA to D-methylmalonyl-CoA/(S)-methylmalonyl-CoA. Within the holoenzyme, the alpha subunit catalyzes the ATP-dependent carboxylation of the biotin carried by the biotin carboxyl carrier (BCC) domain, while the beta subunit then tranfers the carboxyl group from carboxylated biotin to propionyl-CoA. The chain is Propionyl-CoA carboxylase alpha chain from Ruegeria pomeroyi (strain ATCC 700808 / DSM 15171 / DSS-3) (Silicibacter pomeroyi).